The primary structure comprises 501 residues: MAIRVPSRQLFIDGEWREPIKKNRIPIINPSTEEIIGDIPAATAEDVELAVAAARRALKRNKGEDWASASGAHRAKYLRAIAAKITEKKDYFAKLEAMDCGKPLDEAARDIDDVAGCFEYYADQAEALDAKQKAPIALPMDTFKCHVLKQPIGVVGLISPWNYPLLMATWKVAPALAAGCSAVLKPSELASVTCLELAEVCREVGLPPGVLNILTGLGPEAGGPLACHPDVDKVAFTGSTATGSKVMSSAAQLVKPVTLELGGKSPIVIFEDVDLDKAAEWTAFGCFWTNGQICSATSRLLVHESIAAEFLDRLVKWCKNIKISDPFEEGCRLGPVVSKSQYEKVLKFISTAKSEGATILCGGSRPEHLKKGYYVEPTIISDVSTSMQIWREEVFGPVLCQKTFGSEDEAIELANDTQYGLGAAVLSKDLDRCERITKALEVGAVWVNCSQPCFTQAPWGGTKRSGFGRELGEWGIENYLNIKQVTRDTSTDEPWGWYKSP.

Residues 1–7 (MAIRVPS) constitute a chloroplast transit peptide. Position 238–243 (238–243 (GSTATG)) interacts with NAD(+). Glu-260 serves as the catalytic Proton acceptor. The active-site Nucleophile is the Cys-294.

This sequence belongs to the aldehyde dehydrogenase family. Homodimer.

The protein localises to the plastid. The protein resides in the chloroplast. The enzyme catalyses betaine aldehyde + NAD(+) + H2O = glycine betaine + NADH + 2 H(+). It functions in the pathway amine and polyamine biosynthesis; betaine biosynthesis via choline pathway; betaine from betaine aldehyde: step 1/1. In Amaranthus hypochondriacus (Prince-of-Wales feather), this protein is Betaine aldehyde dehydrogenase, chloroplastic (BADH4).